The primary structure comprises 523 residues: Ubiquitin carboxyl-terminal hydrolase 22-B (523 aa).

The UBP-type zinc-finger motif lies at 4 to 121 (AGCSHVNSFK…KEEQRKAWKL (118 aa)). Residues Cys6, His8, Cys46, Cys49, Cys59, Cys62, Cys67, His72, His76, His82, Cys95, and Cys98 each coordinate Zn(2+). Positions 174-518 (RGLINLGNTC…EGYLLFYHKQ (345 aa)) constitute a USP domain. Cys183 functions as the Nucleophile in the catalytic mechanism. The active-site Proton acceptor is the His477.

This sequence belongs to the peptidase C19 family. UBP8 subfamily. As to quaternary structure, component of some SAGA transcription coactivator-HAT complexes.

Its subcellular location is the nucleus. The catalysed reaction is Thiol-dependent hydrolysis of ester, thioester, amide, peptide and isopeptide bonds formed by the C-terminal Gly of ubiquitin (a 76-residue protein attached to proteins as an intracellular targeting signal).. Its function is as follows. Histone deubiquitinating component of the transcription regulatory histone acetylation (HAT) complex SAGA. Catalyzes the deubiquitination of both histones H2A and H2B, thereby acting as a coactivator. Recruited to specific gene promoters by activators, where it is required for transcription. The polypeptide is Ubiquitin carboxyl-terminal hydrolase 22-B (usp22-b) (Xenopus laevis (African clawed frog)).